A 237-amino-acid chain; its full sequence is Putative ATP-binding protein BMEII0108 (237 aa).

An ABC transporter domain is found at 5–205; that stretch reads ISFNNVVMRY…DLPYPRTEAI (201 aa). Residue 37–44 coordinates ATP; the sequence is GPSGCGKS.

It belongs to the ABC transporter superfamily. In terms of assembly, the complex is composed of two ATP-binding proteins (BMEII0108), two transmembrane proteins (BMEII0107) and a solute-binding protein (BMEII0109).

It is found in the cell inner membrane. Its function is as follows. Probably part of an ABC transporter complex. Probably Responsible for energy coupling to the transport system. The polypeptide is Putative ATP-binding protein BMEII0108 (Brucella melitensis biotype 1 (strain ATCC 23456 / CCUG 17765 / NCTC 10094 / 16M)).